The chain runs to 1042 residues: Probable inorganic carbon transporter subunit DabA (1042 aa).

The Zn(2+) site is built by Cys-462, Asp-464, His-721, and Cys-736.

It belongs to the inorganic carbon transporter (TC 9.A.2) DabA family. In terms of assembly, forms a complex with DabB. Requires Zn(2+) as cofactor.

It is found in the cell inner membrane. Its function is as follows. Part of an energy-coupled inorganic carbon pump. This Nitrosomonas eutropha (strain DSM 101675 / C91 / Nm57) protein is Probable inorganic carbon transporter subunit DabA.